A 161-amino-acid polypeptide reads, in one-letter code: Vitamin K epoxide reductase complex subunit 1 (161 aa).

Residues 1 to 9 (MGTTWRSPG) are Cytoplasmic-facing. Residues 10–29 (LVRLALCLAGLALSLYALHV) traverse the membrane as a helical segment. Topologically, residues 30–80 (KAARARDENYRALCDVGTAISCSRVFSSRWGRGFGLVEHMLGADSVLNQSN) are lumenal. Cysteine 43 and cysteine 51 are disulfide-bonded. Position 80 (asparagine 80) interacts with (S)-warfarin. Residues 81–95 (SIFGCLFYTLQLLLG) traverse the membrane as a helical segment. Residues 96 to 100 (CLRGR) are Cytoplasmic-facing. Residues 101 to 128 (WASILLVLSSLVSVAGSVYLAWILFFVL) traverse the membrane as a helical segment. Residues 129 to 131 (YDF) are Lumenal-facing. Cysteine 132 and cysteine 135 are oxidised to a cystine. The helical transmembrane segment at 132-153 (CIVCITTYAINVGLMLLSFQKV) threads the bilayer. 2 residues coordinate phylloquinone: cysteine 135 and tyrosine 139. Tyrosine 139 lines the (S)-warfarin pocket. The Cytoplasmic portion of the chain corresponds to 154–161 (PEHKTKKH).

Belongs to the VKOR family. As to expression, detected in liver.

The protein localises to the endoplasmic reticulum membrane. It carries out the reaction phylloquinone + [protein]-disulfide + H2O = 2,3-epoxyphylloquinone + [protein]-dithiol. The enzyme catalyses phylloquinol + [protein]-disulfide = phylloquinone + [protein]-dithiol. With respect to regulation, inhibited by warfarin (coumadin). Warfarin locks VKORC1 in both redox states into the closed conformation. In terms of biological role, involved in vitamin K metabolism. Catalytic subunit of the vitamin K epoxide reductase (VKOR) complex which reduces inactive vitamin K 2,3-epoxide to active vitamin K. Vitamin K is required for the gamma-carboxylation of various proteins, including clotting factors, and is required for normal blood coagulation, but also for normal bone development. The sequence is that of Vitamin K epoxide reductase complex subunit 1 (Vkorc1) from Mus musculus (Mouse).